A 383-amino-acid polypeptide reads, in one-letter code: Cell division protein FtsZ (383 aa).

GTP contacts are provided by residues 20-24 (GGGGN), 107-109 (GTG), E138, R142, and N186.

It belongs to the FtsZ family. Homodimer. Polymerizes to form a dynamic ring structure in a strictly GTP-dependent manner. Interacts directly with several other division proteins.

The protein localises to the cytoplasm. Essential cell division protein that forms a contractile ring structure (Z ring) at the future cell division site. The regulation of the ring assembly controls the timing and the location of cell division. One of the functions of the FtsZ ring is to recruit other cell division proteins to the septum to produce a new cell wall between the dividing cells. Binds GTP and shows GTPase activity. In Shigella flexneri, this protein is Cell division protein FtsZ.